Consider the following 35-residue polypeptide: Cupiennin-2e (35 aa).

Glutamate 35 bears the Glutamic acid 1-amide mark.

Expressed by the venom gland.

Its subcellular location is the secreted. This Cupiennius salei (American wandering spider) protein is Cupiennin-2e.